We begin with the raw amino-acid sequence, 150 residues long: Regulatory protein RecX (150 aa).

It belongs to the RecX family.

Its subcellular location is the cytoplasm. Modulates RecA activity. The chain is Regulatory protein RecX from Legionella pneumophila (strain Corby).